Consider the following 336-residue polypeptide: GTPase Obg (336 aa).

In terms of domain architecture, Obg spans 1–159; sequence MKFVDEATLI…KTLKLELKLL (159 aa). Residues 160 to 329 form the OBG-type G domain; that stretch reads ADVGLVGLPN…LIEAIFAQLR (170 aa). GTP is bound by residues 166–173, 191–195, 213–216, 283–286, and 310–312; these read GLPNAGKS, FTTLA, DIPG, NKMD, and SAI. 2 residues coordinate Mg(2+): S173 and T193.

It belongs to the TRAFAC class OBG-HflX-like GTPase superfamily. OBG GTPase family. In terms of assembly, monomer. It depends on Mg(2+) as a cofactor.

It localises to the cytoplasm. In terms of biological role, an essential GTPase which binds GTP, GDP and possibly (p)ppGpp with moderate affinity, with high nucleotide exchange rates and a fairly low GTP hydrolysis rate. Plays a role in control of the cell cycle, stress response, ribosome biogenesis and in those bacteria that undergo differentiation, in morphogenesis control. The protein is GTPase Obg of Desulfatibacillum aliphaticivorans.